We begin with the raw amino-acid sequence, 847 residues long: KN motif and ankyrin repeat domain-containing protein 2 (847 aa).

The tract at residues 1–32 is disordered; sequence MAQVLHVPAPFPGTPGQASSAAFPNKEPDPPY. Residues 1-72 are interaction with AIFM1; the sequence is MAQVLHVPAP…PVQRRPRLGS (72 aa). Phosphoserine is present on residues Ser-19, Ser-83, Ser-86, Ser-89, and Ser-92. At Arg-105 the chain carries Omega-N-methylarginine. The segment at 161-182 is disordered; it reads LAGVGLLPPTPRSSGLSTPVAP. A Phosphothreonine modification is found at Thr-170. Coiled coils occupy residues 187–207 and 284–311; these read LAHVREQMAGALRKLRQLEEQ and EAALVAKVAVLETQLKKALQELRAAQTQ. Thr-331 is subject to Phosphothreonine. Ser-358 is modified (phosphoserine). Disordered stretches follow at residues 414-473 and 502-581; these read GAAR…GGAS and NGGY…PEEE. Over residues 420 to 433 the composition is skewed to pro residues; it reads DPPPSPAEPSPSSP. Low complexity-rich tracts occupy residues 434–446 and 506–516; these read YPAAEPENPAPAA and ESSSEDSSTAE. Ser-536 is subject to Phosphoserine. Residues 610-647 form an ANK 0; degenerate repeat; that stretch reads RELKVAYTTVLQEWLRLACRSDAHPELVRRHLVTFRAM. ANK repeat units follow at residues 662 to 692, 696 to 729, 734 to 763, 767 to 797, and 801 to 831; these read NGNTALHYSVSHANFPVVRQLLDSGVCQVDK, AGYSPIMLTALATLKTQDDIDTILQLFRLGNVNA, AGQTALMLAVSHGRVDVVKALLACEVDVNM, DGSTALMCACEHGHKEITGLLLAVPSCDISL, and DGSTALMVALDAGQSEIASMLYSRMNIKCSF. The segment at 665–831 is interaction with NCOA1; that stretch reads TALHYSVSHA…YSRMNIKCSF (167 aa).

As to quaternary structure, interacts (non-phosphorylated form) with NCOA1; NCOA2 AND NCOA3. Interacts with AIFM1. Interacts with ARHGDIA; the interaction is direct and may regulate the interaction of ARHGDIA with RHOA, RAC1 and CDC42. Interacts (via ANK repeats 1-5) with KIF21A. Post-translationally, phosphorylated by casein kinase II upon estrogen stimulation. Phosphorylation induces the release by KANK2 of NCOA1 and its translocation to the nucleus where NCOA1 can activate gene transcription. In terms of tissue distribution, expressed by podocytes in kidney glomeruli (at protein level).

It is found in the cytoplasm. The protein resides in the mitochondrion. In terms of biological role, involved in transcription regulation by sequestering in the cytoplasm nuclear receptor coactivators such as NCOA1, NCOA2 and NCOA3. Involved in regulation of caspase-independent apoptosis by sequestering the proapoptotic factor AIFM1 in mitochondria. Pro-apoptotic stimuli can induce its proteasomal degradation allowing the translocation of AIFM1 to the nucleus to induce apoptosis. Involved in the negative control of vitamin D receptor signaling pathway. Involved in actin stress fibers formation through its interaction with ARHGDIA and the regulation of the Rho signaling pathway. May thereby play a role in cell adhesion and migration, regulating for instance podocytes migration during development of the kidney. Through the Rho signaling pathway may also regulate cell proliferation. The sequence is that of KN motif and ankyrin repeat domain-containing protein 2 from Rattus norvegicus (Rat).